The chain runs to 124 residues: Large ribosomal subunit protein bL12 (124 aa).

The protein belongs to the bacterial ribosomal protein bL12 family. Homodimer. Part of the ribosomal stalk of the 50S ribosomal subunit. Forms a multimeric L10(L12)X complex, where L10 forms an elongated spine to which 2 to 4 L12 dimers bind in a sequential fashion. Binds GTP-bound translation factors.

In terms of biological role, forms part of the ribosomal stalk which helps the ribosome interact with GTP-bound translation factors. Is thus essential for accurate translation. This chain is Large ribosomal subunit protein bL12, found in Burkholderia thailandensis (strain ATCC 700388 / DSM 13276 / CCUG 48851 / CIP 106301 / E264).